The sequence spans 276 residues: MAVEKKFVQEGFTKALVDEYLAKELDRAGYGGMVMNRTPMGTQITVYAEKPGMVIGKGGKLIRKLTRDLERRFRLDNPQIDVQDVGKSDLNARVVANRLASSLEHGWYFRKAGQSMLRRVMDSGALGCEIVISGKLTGPRSRVEKFLAGYIKHSGKPAEEIVDTGYAVAVKKLGAIGCQVRIVPPGAVLPDDFQINAPPKEPEKEPVVEEAVLEAEPSQAAETQEQQAGEKKSELDRLLDEPVETPPTTEEGQSPQEPESRTEMSEAETHGDIQDR.

The KH type-2 domain occupies 17 to 86 (VDEYLAKELD…NPQIDVQDVG (70 aa)). Residues 193-276 (FQINAPPKEP…AETHGDIQDR (84 aa)) form a disordered region. Positions 214-227 (EAEPSQAAETQEQQ) are enriched in low complexity. Basic and acidic residues-rich tracts occupy residues 228 to 240 (AGEKKSELDRLLD) and 258 to 276 (PESRTEMSEAETHGDIQDR).

Belongs to the universal ribosomal protein uS3 family. In terms of assembly, part of the 30S ribosomal subunit.

Functionally, binds the lower part of the 30S subunit head. The sequence is that of Small ribosomal subunit protein uS3 from Methanothrix thermoacetophila (strain DSM 6194 / JCM 14653 / NBRC 101360 / PT) (Methanosaeta thermophila).